Consider the following 26-residue polypeptide: Small toxic protein ShoB (26 aa).

Residues 7-24 (LIKRVIKIIIAVLQLILL) form a helical membrane-spanning segment.

The protein localises to the membrane. Functionally, toxic component of a type I toxin-antitoxin (TA) system. May be a toxic protein; overexpression causes cessation of growth and rapid membrane depolarization. Overexpression induces stress-response and a number of membrane protein genes. The sequence is that of Small toxic protein ShoB (shoB) from Escherichia coli (strain K12).